We begin with the raw amino-acid sequence, 334 residues long: Sterol 4-C-methyltransferase strm-1 (334 aa).

The protein belongs to the class I-like SAM-binding methyltransferase superfamily. Erg6/SMT family. As to expression, expressed in the pharynx and hypodermal syncytium.

The enzyme catalyses 5alpha-cholest-7-en-3-one + S-adenosyl-L-methionine = 4alpha-methyl-5alpha-cholest-7-en-3-one + S-adenosyl-L-homocysteine + H(+). The protein operates within steroid hormone biosynthesis; dafachronic acid biosynthesis. Catalyzes the methyl transfer from S-adenosyl-methionine to the C-4 of the A-ring sterols such as lathosterone (5alpha-cholest-7-en-3-one) thereby rendering them unsuitable as ligand precursors. May irreversibly shunt sterols away from hormone dafachronic acid production. Dafachronic acids act as ligands and bind directly to the nuclear hormone receptor (NHR) daf-12 suppressing dauer formation and inducing reproductive growth. By reducing the biosynthesis of dafachronic acids, this methyltransferase can regulate dauer larva formation. This chain is Sterol 4-C-methyltransferase strm-1 (strm-1), found in Caenorhabditis elegans.